The chain runs to 425 residues: Serine hydroxymethyltransferase 2 (425 aa).

Residues Leu-121 and Gly-125–Leu-127 contribute to the (6S)-5,6,7,8-tetrahydrofolate site. Lys-230 is subject to N6-(pyridoxal phosphate)lysine.

Belongs to the SHMT family. In terms of assembly, homodimer. Pyridoxal 5'-phosphate serves as cofactor.

It is found in the cytoplasm. It carries out the reaction (6R)-5,10-methylene-5,6,7,8-tetrahydrofolate + glycine + H2O = (6S)-5,6,7,8-tetrahydrofolate + L-serine. It participates in one-carbon metabolism; tetrahydrofolate interconversion. Its pathway is amino-acid biosynthesis; glycine biosynthesis; glycine from L-serine: step 1/1. Its function is as follows. Catalyzes the reversible interconversion of serine and glycine with tetrahydrofolate (THF) serving as the one-carbon carrier. This reaction serves as the major source of one-carbon groups required for the biosynthesis of purines, thymidylate, methionine, and other important biomolecules. Also exhibits THF-independent aldolase activity toward beta-hydroxyamino acids, producing glycine and aldehydes, via a retro-aldol mechanism. This Mycobacterium tuberculosis (strain CDC 1551 / Oshkosh) protein is Serine hydroxymethyltransferase 2.